Reading from the N-terminus, the 380-residue chain is Pregnancy-associated glycoprotein 1 (380 aa).

Positions 1-15 (MKWLVLLGLVAFSEC) are cleaved as a signal peptide. The propeptide at 16-53 (IVKIPLRRLKTMRNVVSGKNMLNNFLKEHAYSLSQISF) is activation peptide. 2 N-linked (GlcNAc...) asparagine glycosylation sites follow: N57 and N74. Residues 71 to 377 (YMGNITIGTP…DRGNDRIGLA (307 aa)) enclose the Peptidase A1 domain. D89 is a catalytic residue. C102 and C107 form a disulfide bridge. Residues N125 and N182 are each glycosylated (N-linked (GlcNAc...) asparagine). A disulfide bridge links C261 with C265. Residue D270 is part of the active site. C303 and C337 are oxidised to a cystine.

The protein belongs to the peptidase A1 family. In terms of processing, N-Glycosylated; the glycans terminate in either N-acetyl-galactosamine (GalNAc) or N-acetyllactosamine. Terminal GalNAc on Asn-linked glycans is greatly reduced prior to parturition while lactosamine-type N-glycans remain unaltered. Trophoblast and placental tissue. Produced specifically in the invasive binucleate cells of the placenta. Becomes detectable in maternal serum soon after implantation.

The protein resides in the secreted. The protein localises to the extracellular space. Functionally, appears to be proteolytically inactive. The polypeptide is Pregnancy-associated glycoprotein 1 (Bos taurus (Bovine)).